Here is a 101-residue protein sequence, read N- to C-terminus: NADH-quinone oxidoreductase subunit K (101 aa).

Transmembrane regions (helical) follow at residues 4–24 (LTHFLVLAAILFAISVLGIFL), 30–50 (IILLMAIELMLLAVNFNFIAF), and 61–81 (IFVFFILTVAAAESAIGLAIL).

This sequence belongs to the complex I subunit 4L family. NDH-1 is composed of 14 different subunits. Subunits NuoA, H, J, K, L, M, N constitute the membrane sector of the complex.

The protein resides in the cell inner membrane. It catalyses the reaction a quinone + NADH + 5 H(+)(in) = a quinol + NAD(+) + 4 H(+)(out). In terms of biological role, NDH-1 shuttles electrons from NADH, via FMN and iron-sulfur (Fe-S) centers, to quinones in the respiratory chain. The immediate electron acceptor for the enzyme in this species is believed to be ubiquinone. Couples the redox reaction to proton translocation (for every two electrons transferred, four hydrogen ions are translocated across the cytoplasmic membrane), and thus conserves the redox energy in a proton gradient. This chain is NADH-quinone oxidoreductase subunit K, found in Chromobacterium violaceum (strain ATCC 12472 / DSM 30191 / JCM 1249 / CCUG 213 / NBRC 12614 / NCIMB 9131 / NCTC 9757 / MK).